The primary structure comprises 176 residues: Transcriptional repressor NrdR (176 aa).

Residues 3–34 fold into a zinc finger; that stretch reads CPFCQHTDSRVLESRSAEAGQSVRRRRECLQC. The region spanning 49-139 is the ATP-cone domain; the sequence is ITVIKRNQDR…VYRQFRGIRD (91 aa). Residues 151 to 176 form a disordered region; it reads GDGPLPSVLDEPYEDTAQPTIMISPQ. A compositionally biased stretch (polar residues) spans 167-176; the sequence is AQPTIMISPQ.

Belongs to the NrdR family. The cofactor is Zn(2+).

In terms of biological role, negatively regulates transcription of bacterial ribonucleotide reductase nrd genes and operons by binding to NrdR-boxes. The chain is Transcriptional repressor NrdR from Acaryochloris marina (strain MBIC 11017).